A 275-amino-acid chain; its full sequence is Light-independent protochlorophyllide reductase iron-sulfur ATP-binding protein (275 aa).

Residues 10 to 15 and Lys-39 each bind ATP; that span reads GIGKST. Ser-14 contacts Mg(2+). Positions 95 and 129 each coordinate [4Fe-4S] cluster. 180-181 is an ATP binding site; sequence NR.

This sequence belongs to the NifH/BchL/ChlL family. As to quaternary structure, homodimer. Protochlorophyllide reductase is composed of three subunits; ChlL, ChlN and ChlB. [4Fe-4S] cluster is required as a cofactor.

It carries out the reaction chlorophyllide a + oxidized 2[4Fe-4S]-[ferredoxin] + 2 ADP + 2 phosphate = protochlorophyllide a + reduced 2[4Fe-4S]-[ferredoxin] + 2 ATP + 2 H2O. It participates in porphyrin-containing compound metabolism; chlorophyll biosynthesis (light-independent). Functionally, component of the dark-operative protochlorophyllide reductase (DPOR) that uses Mg-ATP and reduced ferredoxin to reduce ring D of protochlorophyllide (Pchlide) to form chlorophyllide a (Chlide). This reaction is light-independent. The L component serves as a unique electron donor to the NB-component of the complex, and binds Mg-ATP. This chain is Light-independent protochlorophyllide reductase iron-sulfur ATP-binding protein, found in Gloeobacter violaceus (strain ATCC 29082 / PCC 7421).